We begin with the raw amino-acid sequence, 367 residues long: Germination protease (367 aa).

The propeptide occupies 1–15 (MKEPLDLSKYSVRTD).

Belongs to the peptidase A25 family. Homotetramer. In terms of processing, autoproteolytically processed. The inactive tetrameric zymogen termed p46 autoprocesses to a smaller form termed p41, which is active only during spore germination.

It carries out the reaction Endopeptidase action with P4 Glu or Asp, P1 preferably Glu &gt; Asp, P1' hydrophobic and P2' Ala.. In terms of biological role, initiates the rapid degradation of small, acid-soluble proteins during spore germination. The chain is Germination protease from Bacillus mycoides (strain KBAB4) (Bacillus weihenstephanensis).